The primary structure comprises 92 residues: Small ribosomal subunit protein bS18 (92 aa).

A disordered region spans residues 1 to 28 (MTQQGNSGERKPRGKGPKRPRKPKVDPF). Residues 12 to 22 (PRGKGPKRPRK) are compositionally biased toward basic residues.

This sequence belongs to the bacterial ribosomal protein bS18 family. As to quaternary structure, part of the 30S ribosomal subunit. Forms a tight heterodimer with protein bS6.

Binds as a heterodimer with protein bS6 to the central domain of the 16S rRNA, where it helps stabilize the platform of the 30S subunit. The sequence is that of Small ribosomal subunit protein bS18 from Deinococcus radiodurans (strain ATCC 13939 / DSM 20539 / JCM 16871 / CCUG 27074 / LMG 4051 / NBRC 15346 / NCIMB 9279 / VKM B-1422 / R1).